The following is a 71-amino-acid chain: Brevinin-1SN1 (71 aa).

An N-terminal signal peptide occupies residues 1–22 (MFTMKKPLLLLFFLGTINLSLC). Residues 23–45 (EEERNADEEEKRDGDDEMDAEVE) constitute a propeptide, removed in mature form. Residues Cys-65 and Cys-71 are joined by a disulfide bond.

It belongs to the frog skin active peptide (FSAP) family. Brevinin subfamily. In terms of tissue distribution, expressed by the skin glands.

It localises to the secreted. Functionally, antimicrobial peptide. Active against some Gram-negative and a variety of Gram-positive bacterial strains. Active against fungus C.glabrata 090902 but not against C.albicans ATCC 10231. Shows hemolytic activity against human erythrocytes. This is Brevinin-1SN1 from Sylvirana spinulosa (Fine-spined frog).